A 322-amino-acid polypeptide reads, in one-letter code: NADH oxidoreductase HCR (322 aa).

The 101-residue stretch at Q7–D107 folds into the FAD-binding FR-type domain. The interval E111–E213 is oxidoreductase. Positions S237–A322 constitute a 2Fe-2S ferredoxin-type domain. C273, C278, C281, and C311 together coordinate [2Fe-2S] cluster.

This sequence in the N-terminal section; belongs to the FAD-binding oxidoreductase type 6 family. The cofactor is [2Fe-2S] cluster. Requires FAD as cofactor.

In terms of biological role, NADH oxidoreductase acting in concert with HCP. The polypeptide is NADH oxidoreductase HCR (hcr) (Escherichia coli (strain K12)).